A 377-amino-acid chain; its full sequence is 4-hydroxy-3-methylbut-2-en-1-yl diphosphate synthase (flavodoxin) (377 aa).

4 residues coordinate [4Fe-4S] cluster: C275, C278, C310, and E317.

Belongs to the IspG family. It depends on [4Fe-4S] cluster as a cofactor.

The enzyme catalyses (2E)-4-hydroxy-3-methylbut-2-enyl diphosphate + oxidized [flavodoxin] + H2O + 2 H(+) = 2-C-methyl-D-erythritol 2,4-cyclic diphosphate + reduced [flavodoxin]. The protein operates within isoprenoid biosynthesis; isopentenyl diphosphate biosynthesis via DXP pathway; isopentenyl diphosphate from 1-deoxy-D-xylulose 5-phosphate: step 5/6. Converts 2C-methyl-D-erythritol 2,4-cyclodiphosphate (ME-2,4cPP) into 1-hydroxy-2-methyl-2-(E)-butenyl 4-diphosphate. The protein is 4-hydroxy-3-methylbut-2-en-1-yl diphosphate synthase (flavodoxin) of Ruegeria sp. (strain TM1040) (Silicibacter sp.).